The chain runs to 181 residues: RNA pyrophosphohydrolase (181 aa).

Residues 6-148 (GFRPNVGIIV…KRQVYRQALQ (143 aa)) enclose the Nudix hydrolase domain. A Nudix box motif is present at residues 38–59 (GGVEANETPLEALYRELREEVG).

Belongs to the Nudix hydrolase family. RppH subfamily. A divalent metal cation serves as cofactor.

In terms of biological role, accelerates the degradation of transcripts by removing pyrophosphate from the 5'-end of triphosphorylated RNA, leading to a more labile monophosphorylated state that can stimulate subsequent ribonuclease cleavage. The sequence is that of RNA pyrophosphohydrolase from Halorhodospira halophila (strain DSM 244 / SL1) (Ectothiorhodospira halophila (strain DSM 244 / SL1)).